The sequence spans 236 residues: Orotidine 5'-phosphate decarboxylase (236 aa).

Substrate is bound by residues D12, K34, 60–69, T123, R184, Q193, G213, and R214; that span reads DLKLHDIPHT. K62 (proton donor) is an active-site residue.

Belongs to the OMP decarboxylase family. Type 1 subfamily. Homodimer.

The enzyme catalyses orotidine 5'-phosphate + H(+) = UMP + CO2. It functions in the pathway pyrimidine metabolism; UMP biosynthesis via de novo pathway; UMP from orotate: step 2/2. Catalyzes the decarboxylation of orotidine 5'-monophosphate (OMP) to uridine 5'-monophosphate (UMP). In Gluconobacter oxydans (strain 621H) (Gluconobacter suboxydans), this protein is Orotidine 5'-phosphate decarboxylase.